We begin with the raw amino-acid sequence, 119 residues long: Basic phospholipase A2 DE-1 (119 aa).

7 disulfides stabilise this stretch: C11–C71, C26–C118, C28–C44, C43–C99, C50–C92, C60–C85, and C78–C90. Ca(2+) is bound by residues Y27, G29, G31, and D48. D93 is an active-site residue.

Belongs to the phospholipase A2 family. Group I subfamily. D49 sub-subfamily. Ca(2+) is required as a cofactor. As to expression, expressed by the venom gland.

It is found in the secreted. The enzyme catalyses a 1,2-diacyl-sn-glycero-3-phosphocholine + H2O = a 1-acyl-sn-glycero-3-phosphocholine + a fatty acid + H(+). Functionally, PLA2 catalyzes the calcium-dependent hydrolysis of the 2-acyl groups in 3-sn-phosphoglycerides. In Hemachatus haemachatus (Rinkhals), this protein is Basic phospholipase A2 DE-1.